A 415-amino-acid chain; its full sequence is JmjC domain-containing protein C (415 aa).

The segment at 97–140 is disordered; it reads NEKNNQSNNNNNNNNNNNNNNNNNNNNNNNNNNNNNNNNNNKPK. The segment covering 104-137 has biased composition (low complexity); the sequence is NNNNNNNNNNNNNNNNNNNNNNNNNNNNNNNNNN. The region spanning 127 to 302 is the JmjC domain; sequence NNNNNNNNNN…ELLKSNKLWC (176 aa).

The polypeptide is JmjC domain-containing protein C (jcdC) (Dictyostelium discoideum (Social amoeba)).